The chain runs to 199 residues: Fe/S biogenesis protein NfuA (199 aa).

Cys-151 and Cys-154 together coordinate [4Fe-4S] cluster.

This sequence belongs to the NfuA family. Homodimer. It depends on [4Fe-4S] cluster as a cofactor.

Involved in iron-sulfur cluster biogenesis. Binds a 4Fe-4S cluster, can transfer this cluster to apoproteins, and thereby intervenes in the maturation of Fe/S proteins. Could also act as a scaffold/chaperone for damaged Fe/S proteins. The chain is Fe/S biogenesis protein NfuA from Stenotrophomonas maltophilia (strain R551-3).